A 269-amino-acid polypeptide reads, in one-letter code: tRNA-cytidine(32) 2-sulfurtransferase (269 aa).

The short motif at 53 to 58 (SGGKDS) is the PP-loop motif element. The [4Fe-4S] cluster site is built by Cys128, Cys131, and Cys218.

Belongs to the TtcA family. In terms of assembly, homodimer. Mg(2+) is required as a cofactor. [4Fe-4S] cluster serves as cofactor.

The protein localises to the cytoplasm. The catalysed reaction is cytidine(32) in tRNA + S-sulfanyl-L-cysteinyl-[cysteine desulfurase] + AH2 + ATP = 2-thiocytidine(32) in tRNA + L-cysteinyl-[cysteine desulfurase] + A + AMP + diphosphate + H(+). Its pathway is tRNA modification. Its function is as follows. Catalyzes the ATP-dependent 2-thiolation of cytidine in position 32 of tRNA, to form 2-thiocytidine (s(2)C32). The sulfur atoms are provided by the cysteine/cysteine desulfurase (IscS) system. This is tRNA-cytidine(32) 2-sulfurtransferase from Pelobacter propionicus (strain DSM 2379 / NBRC 103807 / OttBd1).